The chain runs to 396 residues: Phospholipase A1-II 4 (396 aa).

Residue Ser221 is the Acyl-ester intermediate of the active site. Active-site charge relay system residues include Ser221, Asp282, and His319.

The protein belongs to the AB hydrolase superfamily. Lipase family.

It localises to the cytoplasm. Functionally, acylhydrolase that catalyzes the hydrolysis of phospholipids at the sn-1 position. The chain is Phospholipase A1-II 4 from Oryza sativa subsp. japonica (Rice).